Here is a 637-residue protein sequence, read N- to C-terminus: Chaperone protein HtpG (637 aa).

Positions 1 to 347 (MTQSVHAETH…SNDLPLNVSR (347 aa)) are a; substrate-binding. The b stretch occupies residues 348–564 (EILQDNKVTV…NHGMSTQMIK (217 aa)). The segment at 565–637 (LMRAAGQPVP…SRINRLLLQA (73 aa)) is c.

The protein belongs to the heat shock protein 90 family. In terms of assembly, homodimer.

It localises to the cytoplasm. Molecular chaperone. Has ATPase activity. This Aeromonas salmonicida (strain A449) protein is Chaperone protein HtpG.